A 155-amino-acid chain; its full sequence is 2-C-methyl-D-erythritol 2,4-cyclodiphosphate synthase (155 aa).

Residues D8 and H10 each coordinate a divalent metal cation. 4-CDP-2-C-methyl-D-erythritol 2-phosphate is bound by residues 8 to 10 (DVH) and 34 to 35 (HS). H42 provides a ligand contact to a divalent metal cation. Residues 56–58 (DIG), 61–65 (FPDKD), 132–135 (TTTE), and R142 contribute to the 4-CDP-2-C-methyl-D-erythritol 2-phosphate site.

Belongs to the IspF family. Homotrimer. A divalent metal cation serves as cofactor.

It catalyses the reaction 4-CDP-2-C-methyl-D-erythritol 2-phosphate = 2-C-methyl-D-erythritol 2,4-cyclic diphosphate + CMP. Its pathway is isoprenoid biosynthesis; isopentenyl diphosphate biosynthesis via DXP pathway; isopentenyl diphosphate from 1-deoxy-D-xylulose 5-phosphate: step 4/6. Functionally, involved in the biosynthesis of isopentenyl diphosphate (IPP) and dimethylallyl diphosphate (DMAPP), two major building blocks of isoprenoid compounds. Catalyzes the conversion of 4-diphosphocytidyl-2-C-methyl-D-erythritol 2-phosphate (CDP-ME2P) to 2-C-methyl-D-erythritol 2,4-cyclodiphosphate (ME-CPP) with a corresponding release of cytidine 5-monophosphate (CMP). The sequence is that of 2-C-methyl-D-erythritol 2,4-cyclodiphosphate synthase from Desulfatibacillum aliphaticivorans.